Consider the following 266-residue polypeptide: Phosphatidylglycerol--prolipoprotein diacylglyceryl transferase (266 aa).

The next 7 helical transmembrane spans lie at 17 to 37 (LKIH…WLLA), 56 to 76 (LVFW…VLFY), 92 to 112 (WKGG…VWWF), 120 to 140 (FFQL…AGRI), 171 to 191 (PSQL…LWLF), 199 to 219 (ASVS…VEFV), and 233 to 253 (WLTM…ALMV). Arginine 139 is a binding site for a 1,2-diacyl-sn-glycero-3-phospho-(1'-sn-glycerol).

The protein belongs to the Lgt family.

It localises to the cell inner membrane. The catalysed reaction is L-cysteinyl-[prolipoprotein] + a 1,2-diacyl-sn-glycero-3-phospho-(1'-sn-glycerol) = an S-1,2-diacyl-sn-glyceryl-L-cysteinyl-[prolipoprotein] + sn-glycerol 1-phosphate + H(+). Its pathway is protein modification; lipoprotein biosynthesis (diacylglyceryl transfer). In terms of biological role, catalyzes the transfer of the diacylglyceryl group from phosphatidylglycerol to the sulfhydryl group of the N-terminal cysteine of a prolipoprotein, the first step in the formation of mature lipoproteins. This is Phosphatidylglycerol--prolipoprotein diacylglyceryl transferase from Pseudomonas aeruginosa (strain UCBPP-PA14).